Here is a 320-residue protein sequence, read N- to C-terminus: Malate dehydrogenase (320 aa).

NAD(+) contacts are provided by residues 10–15 and Asp34; that span reads GSGMIG. Substrate contacts are provided by Arg83 and Arg89. Residues Asn96 and 119-121 contribute to the NAD(+) site; that span reads ITN. Residues Asn121 and Arg152 each coordinate substrate. The Proton acceptor role is filled by His176.

The protein belongs to the LDH/MDH superfamily. MDH type 3 family.

The catalysed reaction is (S)-malate + NAD(+) = oxaloacetate + NADH + H(+). Functionally, catalyzes the reversible oxidation of malate to oxaloacetate. This chain is Malate dehydrogenase, found in Rhizobium meliloti (strain 1021) (Ensifer meliloti).